The following is a 131-amino-acid chain: Cystatin-like cysteine protease inhibitor EPIC3 (131 aa).

Positions 1–20 (MAFTRSIALFAGLALAASSA) are cleaved as a signal peptide. Asn33 is a glycosylation site (N-linked (GlcNAc...) asparagine). The Secondary area of contact motif lies at 71–75 (QTVAG).

It belongs to the cystatin family.

The protein resides in the secreted. Secreted effector that interacts with and inhibits host apoplastic pathogenesis-related papain-like cysteine proteases. Inhibition of host proteases by a pathogen extracellular protease inhibitor forms a specific type of defense-counterdefense mechanism between plants and microbial pathogens. In Phytophthora infestans (Potato late blight agent), this protein is Cystatin-like cysteine protease inhibitor EPIC3.